The sequence spans 64 residues: Small ribosomal subunit protein bS21 (64 aa).

The protein belongs to the bacterial ribosomal protein bS21 family.

This chain is Small ribosomal subunit protein bS21, found in Neorickettsia sennetsu (strain ATCC VR-367 / Miyayama) (Ehrlichia sennetsu).